A 113-amino-acid polypeptide reads, in one-letter code: Ig heavy chain V-III region A4 (113 aa).

An Ig-like domain is found at 1 to 113; sequence EVKLEESGGG…YWGQGTLVTV (113 aa). A disulfide bridge links Cys22 with Cys98.

The chain is Ig heavy chain V-III region A4 from Mus musculus (Mouse).